The chain runs to 309 residues: Porphobilinogen deaminase (309 aa).

Cys241 carries the S-(dipyrrolylmethanemethyl)cysteine modification.

It belongs to the HMBS family. Monomer. Dipyrromethane is required as a cofactor.

The enzyme catalyses 4 porphobilinogen + H2O = hydroxymethylbilane + 4 NH4(+). It functions in the pathway porphyrin-containing compound metabolism; protoporphyrin-IX biosynthesis; coproporphyrinogen-III from 5-aminolevulinate: step 2/4. Tetrapolymerization of the monopyrrole PBG into the hydroxymethylbilane pre-uroporphyrinogen in several discrete steps. This Bacillus cereus (strain B4264) protein is Porphobilinogen deaminase.